The sequence spans 361 residues: Geranylgeranyl pyrophosphate synthase 3 (361 aa).

A disordered region spans residues 44-63; it reads DSNGSKELAPNGAQSRVQKP. Residues lysine 81, arginine 84, and histidine 113 each coordinate isopentenyl diphosphate. Mg(2+) is bound by residues aspartate 120 and aspartate 124. Arginine 129 serves as a coordination point for dimethylallyl diphosphate. Residue arginine 130 participates in isopentenyl diphosphate binding. Positions 207, 208, and 244 each coordinate dimethylallyl diphosphate. Aspartate 247 lines the Mg(2+) pocket. Residues asparagine 251, lysine 261, and lysine 271 each contribute to the dimethylallyl diphosphate site.

Belongs to the FPP/GGPP synthase family. Mg(2+) serves as cofactor.

The enzyme catalyses isopentenyl diphosphate + dimethylallyl diphosphate = (2E)-geranyl diphosphate + diphosphate. It catalyses the reaction isopentenyl diphosphate + (2E)-geranyl diphosphate = (2E,6E)-farnesyl diphosphate + diphosphate. The catalysed reaction is isopentenyl diphosphate + (2E,6E)-farnesyl diphosphate = (2E,6E,10E)-geranylgeranyl diphosphate + diphosphate. In terms of biological role, geranylgeranyl pyrophosphate synthase; part of the gene cluster 25 that mediates the biosynthesis of an isoprenoid secondary metabolite. The protein is Geranylgeranyl pyrophosphate synthase 3 (GGS3) of Zymoseptoria tritici (strain CBS 115943 / IPO323) (Speckled leaf blotch fungus).